Here is a 362-residue protein sequence, read N- to C-terminus: UDP-N-acetylglucosamine--N-acetylmuramyl-(pentapeptide) pyrophosphoryl-undecaprenol N-acetylglucosamine transferase (362 aa).

UDP-N-acetyl-alpha-D-glucosamine is bound by residues 15 to 17 (TGG), N127, R165, S191, I247, 266 to 271 (ALTVSE), and Q292.

It belongs to the glycosyltransferase 28 family. MurG subfamily.

Its subcellular location is the cell inner membrane. It carries out the reaction di-trans,octa-cis-undecaprenyl diphospho-N-acetyl-alpha-D-muramoyl-L-alanyl-D-glutamyl-meso-2,6-diaminopimeloyl-D-alanyl-D-alanine + UDP-N-acetyl-alpha-D-glucosamine = di-trans,octa-cis-undecaprenyl diphospho-[N-acetyl-alpha-D-glucosaminyl-(1-&gt;4)]-N-acetyl-alpha-D-muramoyl-L-alanyl-D-glutamyl-meso-2,6-diaminopimeloyl-D-alanyl-D-alanine + UDP + H(+). It participates in cell wall biogenesis; peptidoglycan biosynthesis. Functionally, cell wall formation. Catalyzes the transfer of a GlcNAc subunit on undecaprenyl-pyrophosphoryl-MurNAc-pentapeptide (lipid intermediate I) to form undecaprenyl-pyrophosphoryl-MurNAc-(pentapeptide)GlcNAc (lipid intermediate II). The protein is UDP-N-acetylglucosamine--N-acetylmuramyl-(pentapeptide) pyrophosphoryl-undecaprenol N-acetylglucosamine transferase of Shewanella sp. (strain ANA-3).